The following is a 701-amino-acid chain: Polyphosphate kinase (701 aa).

Residue Asn45 participates in ATP binding. Mg(2+) contacts are provided by Arg373 and Arg403. The PLD phosphodiesterase 1 domain maps to 428-462 (PGMKIHAKLLLITRKEGDEFVRYAHIGTGNFHERT). Catalysis depends on His433, which acts as the Phosphohistidine intermediate. Residues Tyr466, Arg562, and His590 each coordinate ATP. In terms of domain architecture, PLD phosphodiesterase 2 spans 585–615 (DRFLEHPRVLVVHNDGNPQVFISSADWMERN).

This sequence belongs to the polyphosphate kinase 1 (PPK1) family. It depends on Mg(2+) as a cofactor. Post-translationally, an intermediate of this reaction is the autophosphorylated ppk in which a phosphate is covalently linked to a histidine residue through a N-P bond.

The catalysed reaction is [phosphate](n) + ATP = [phosphate](n+1) + ADP. Catalyzes the reversible transfer of the terminal phosphate of ATP to form a long-chain polyphosphate (polyP). The polypeptide is Polyphosphate kinase (Vibrio cholerae serotype O1 (strain ATCC 39315 / El Tor Inaba N16961)).